Consider the following 366-residue polypeptide: ATP-dependent 6-phosphofructokinase 2 (366 aa).

Residues Gly15, 78 to 79 (KD), and 119 to 122 (GDGT) each bind ATP. Asp120 provides a ligand contact to Mg(2+). Substrate-binding positions include 142–144 (TID), Arg179, 186–188 (MGR), Glu239, Arg284, and 290–293 (HIQR). Asp144 functions as the Proton acceptor in the catalytic mechanism.

It belongs to the phosphofructokinase type A (PFKA) family. Mixed-substrate PFK group III subfamily. Homodimer or homotetramer. The cofactor is Mg(2+).

It is found in the cytoplasm. It carries out the reaction beta-D-fructose 6-phosphate + ATP = beta-D-fructose 1,6-bisphosphate + ADP + H(+). It participates in carbohydrate degradation; glycolysis; D-glyceraldehyde 3-phosphate and glycerone phosphate from D-glucose: step 3/4. With respect to regulation, subject to allosteric activation by ADP and other diphosphonucleosides, and inhibition by phosphoenolpyruvate. Its function is as follows. Catalyzes the phosphorylation of D-fructose 6-phosphate to fructose 1,6-bisphosphate by ATP, the first committing step of glycolysis. This chain is ATP-dependent 6-phosphofructokinase 2, found in Clostridium perfringens (strain 13 / Type A).